Consider the following 354-residue polypeptide: MEVIARPPLSRWSYRHVLDLAAFSQEDYATVLELASRFRALPMSGPRRLPALQGRLVTTLFFEPSTRTRSSFELAARRLSADVQSFSPASSALAKGESLLDTARTYVAMGADVLVVRHRCAGVPAELARDLEAAGCRTAVLNAGDGLHSHPSQALLDLFTLARHFNPETPTLEALAGKRIVIVGDVLHSRVARSNLWSLTACGVDVVLCGPASLLPDAFAQFTHAPPPGQAQDLVAQRGSLRIERDLDRALEGADAVMTLRLQQERMKEQLITSLEAYHQRYGLSHRRLERCGKSVPVLHPGPVNRGVELSGELLDDPSRSLVEEQVRNGIPVRMALLYLMAASEPASSAAGLS.

Carbamoyl phosphate is bound by residues Arg67 and Thr68. Residue Lys95 coordinates L-aspartate. Positions 117, 150, and 153 each coordinate carbamoyl phosphate. Arg190 and Arg261 together coordinate L-aspartate. Carbamoyl phosphate contacts are provided by Gly302 and Pro303.

Belongs to the aspartate/ornithine carbamoyltransferase superfamily. ATCase family. In terms of assembly, heterododecamer (2C3:3R2) of six catalytic PyrB chains organized as two trimers (C3), and six regulatory PyrI chains organized as three dimers (R2).

The catalysed reaction is carbamoyl phosphate + L-aspartate = N-carbamoyl-L-aspartate + phosphate + H(+). The protein operates within pyrimidine metabolism; UMP biosynthesis via de novo pathway; (S)-dihydroorotate from bicarbonate: step 2/3. In terms of biological role, catalyzes the condensation of carbamoyl phosphate and aspartate to form carbamoyl aspartate and inorganic phosphate, the committed step in the de novo pyrimidine nucleotide biosynthesis pathway. This chain is Aspartate carbamoyltransferase catalytic subunit, found in Synechococcus sp. (strain RCC307).